Here is a 351-residue protein sequence, read N- to C-terminus: Pentatricopeptide repeat-containing protein At2g40240, mitochondrial (351 aa).

A mitochondrion-targeting transit peptide spans 1 to 27 (MSLLRRRFVKQSVNCITFLQILAERSF). 6 PPR repeats span residues 106–140 (RKNA…RLGL), 141–175 (TPST…SVSM), 176–210 (DVTA…GNSP), 211–245 (DSRS…GVTV), 246–280 (LYST…DLRL), and 281–315 (DSES…GLRM).

Belongs to the PPR family. P subfamily.

The protein resides in the mitochondrion. The polypeptide is Pentatricopeptide repeat-containing protein At2g40240, mitochondrial (Arabidopsis thaliana (Mouse-ear cress)).